We begin with the raw amino-acid sequence, 291 residues long: MHLLTATVTPFFPNGTIDFASLERLLSFQDAVGNGVVLLGSTGEGLSLTKKEKQALICFACDLQLKVPLFVGTSGTLLEEVLDWIHFCNDLPISGFLMTTPIYTKPKLCGQILWFEAVLNAAKHPAILYNIPSRAATPLYLDTVKALAHHPQFLGIKDSGGSVEEFQSYKSIAPHIQLYCGDDVFWSEMAACGAHGLISVLSNAWPEEAREYVLNPQEQDYRSLWMETCRWVYTTTNPIGIKAILAYKKAITHAQLRLPLSIEDFDLENVSPAVESMLAWPKLRTSVFSYS.

Thr-42 serves as a coordination point for pyruvate. Tyr-129 functions as the Proton donor/acceptor in the catalytic mechanism. Catalysis depends on Lys-157, which acts as the Schiff-base intermediate with substrate. Ile-198 provides a ligand contact to pyruvate.

It belongs to the DapA family. As to quaternary structure, homotetramer; dimer of dimers.

It localises to the cytoplasm. The catalysed reaction is L-aspartate 4-semialdehyde + pyruvate = (2S,4S)-4-hydroxy-2,3,4,5-tetrahydrodipicolinate + H2O + H(+). Its pathway is amino-acid biosynthesis; L-lysine biosynthesis via DAP pathway; (S)-tetrahydrodipicolinate from L-aspartate: step 3/4. Catalyzes the condensation of (S)-aspartate-beta-semialdehyde [(S)-ASA] and pyruvate to 4-hydroxy-tetrahydrodipicolinate (HTPA). The polypeptide is 4-hydroxy-tetrahydrodipicolinate synthase (Chlamydia pneumoniae (Chlamydophila pneumoniae)).